Consider the following 366-residue polypeptide: Probable trehalose-phosphate phosphatase 3 (366 aa).

It belongs to the trehalose phosphatase family. A divalent metal cation serves as cofactor.

The enzyme catalyses alpha,alpha-trehalose 6-phosphate + H2O = alpha,alpha-trehalose + phosphate. It functions in the pathway glycan biosynthesis; trehalose biosynthesis. Its function is as follows. Removes the phosphate from trehalose 6-phosphate to produce free trehalose. Trehalose accumulation in plant may improve abiotic stress tolerance. The protein is Probable trehalose-phosphate phosphatase 3 (TPP3) of Oryza sativa subsp. japonica (Rice).